The primary structure comprises 145 residues: uncharacterized protein (145 aa).

A coiled-coil region spans residues 1 to 41 (MEQHYHQQNQLRQLKQQQLKELLQQQSKDKEEDEQKHDDYR). The segment at 1-91 (MEQHYHQQNQ…LQISEPEGES (91 aa)) is disordered. Residues 7 to 26 (QQNQLRQLKQQQLKELLQQQ) show a composition bias toward low complexity. Residues 27-42 (SKDKEEDEQKHDDYRS) are compositionally biased toward basic and acidic residues. Residues 43 to 58 (PTKTTTTTATSTSAAT) show a composition bias toward low complexity.

This is an uncharacterized protein from Dictyostelium discoideum (Social amoeba).